The primary structure comprises 196 residues: Corticoliberin (196 aa).

An N-terminal signal peptide occupies residues Met1–Ala24. The propeptide occupies Leu25 to Arg153. Disordered stretches follow at residues Pro32–Ala61, Ala85–Glu105, and Gly136–Pro158. Composition is skewed to low complexity over residues Pro38–Phe47 and Ala85–Pro104. The segment covering Glu146–Glu156 has biased composition (basic and acidic residues). At Ile194 the chain carries Isoleucine amide.

The protein belongs to the sauvagine/corticotropin-releasing factor/urotensin I family. As to quaternary structure, interacts (via C-terminus) with CRFR1 (via N-terminal extracellular domain). In terms of tissue distribution, produced by the hypothalamus and placenta.

It is found in the secreted. Its function is as follows. Hormone regulating the release of corticotropin from pituitary gland. Induces NLRP6 in intestinal epithelial cells, hence may influence gut microbiota profile. In Homo sapiens (Human), this protein is Corticoliberin (CRH).